The chain runs to 432 residues: RNA exonuclease 4 (432 aa).

The span at 42–54 (ARKKAKKKFRKSK) shows a compositional bias: basic residues. Positions 42 to 177 (ARKKAKKKFR…AKKRTYSDIS (136 aa)) are disordered. The span at 121-137 (KASDKSKGDKQRTEKAK) shows a compositional bias: basic and acidic residues. Position 123 is a phosphoserine (S123). K127 is covalently cross-linked (Glycyl lysine isopeptide (Lys-Gly) (interchain with G-Cter in SUMO2)). Residues 230-381 (KRLGQKKRTI…PSLKRLSEKI (152 aa)) form the Exonuclease domain.

It belongs to the REXO4 family. In terms of assembly, can bind ESR1 and ESR2. This interaction is abrogated by estrogen and augmented by tamoxifen treatment.

The protein resides in the nucleus. The protein localises to the nucleolus. Its function is as follows. May function as an exonuclease. This is RNA exonuclease 4 (Rexo4) from Mus musculus (Mouse).